The chain runs to 557 residues: Calcium-dependent protein kinase 4 (557 aa).

The segment at 1–72 (MGNTCRGSIG…LVSPRKASMN (72 aa)) is disordered. G2 carries N-myristoyl glycine lipidation. A compositionally biased stretch (polar residues) spans 15-27 (QGYTQPEDSSCST). The span at 28–48 (NHNPSSGNSYSSSDNFSPTSN) shows a compositional bias: low complexity. The 259-residue stretch at 94–352 (YTLGRKLGQG…AHEVLCHPWI (259 aa)) folds into the Protein kinase domain. Residues 100–108 (LGQGQFGTT) and K123 each bind ATP. D218 (proton acceptor) is an active-site residue. Positions 358 to 388 (APDRALDPAVLSRLKQFSAMNKLKKMALRVI) are autoinhibitory domain. 4 consecutive EF-hand domains span residues 395 to 430 (EEIA…YGST), 431 to 466 (LKDT…LNKL), 467 to 502 (EREE…HNMT), and 506 to 536 (FEDI…GNPC). The Ca(2+) site is built by D408, D410, S412, E419, D444, D446, S448, T450, E455, D480, D482, S484, Y486, E491, D514, D516, D518, R520, and E525.

The protein belongs to the protein kinase superfamily. Ser/Thr protein kinase family. CDPK subfamily.

The protein resides in the membrane. It catalyses the reaction L-seryl-[protein] + ATP = O-phospho-L-seryl-[protein] + ADP + H(+). The catalysed reaction is L-threonyl-[protein] + ATP = O-phospho-L-threonyl-[protein] + ADP + H(+). With respect to regulation, activated by calcium. Autophosphorylation may play an important role in the regulation of the kinase activity. Regulates the production of reactive oxygen species (ROS) by NADPH oxidase. This Solanum tuberosum (Potato) protein is Calcium-dependent protein kinase 4 (CPK4).